The following is a 240-amino-acid chain: MLVIPAIDILDGKCVRLTKGNFDSKEVYYDNPADMAKMWQECGAKRIHVVDLDGARQGHLVNRKVIEKIVNSCSVDIEVGGGIRNKEALDYLFSIGVSYIILGSAAIYDKDLLLYSVSHYGEKTIVGIDSKKREVAVSGWLERTKIKDTELAEKIKEIGIKTIIFTDISKDGTLHGPNFEALKDMLKVGVEIIASGGISSIEDLKRLKDMGVTGAIIGKALYTGMIDLKAALLELEREGI.

The Proton acceptor role is filled by D8. D129 functions as the Proton donor in the catalytic mechanism.

Belongs to the HisA/HisF family.

The protein resides in the cytoplasm. The enzyme catalyses 1-(5-phospho-beta-D-ribosyl)-5-[(5-phospho-beta-D-ribosylamino)methylideneamino]imidazole-4-carboxamide = 5-[(5-phospho-1-deoxy-D-ribulos-1-ylimino)methylamino]-1-(5-phospho-beta-D-ribosyl)imidazole-4-carboxamide. Its pathway is amino-acid biosynthesis; L-histidine biosynthesis; L-histidine from 5-phospho-alpha-D-ribose 1-diphosphate: step 4/9. This is 1-(5-phosphoribosyl)-5-[(5-phosphoribosylamino)methylideneamino] imidazole-4-carboxamide isomerase from Caldanaerobacter subterraneus subsp. tengcongensis (strain DSM 15242 / JCM 11007 / NBRC 100824 / MB4) (Thermoanaerobacter tengcongensis).